A 464-amino-acid polypeptide reads, in one-letter code: Heterogeneous nuclear ribonucleoprotein K (464 aa).

At Met1 the chain carries N-acetylmethionine. Residues 1 to 37 (METEQPEETFPNTETNGEFGKRPAEDMEEEQAFKRSR) are disordered. Positions 1–276 (METEQPEETF…GRGGRPMPPS (276 aa)) are necessary for interaction with DDX1. The segment covering 19-37 (FGKRPAEDMEEEQAFKRSR) has biased composition (basic and acidic residues). An N6-acetyllysine; alternate modification is found at Lys34. Lys34 is covalently cross-linked (Glycyl lysine isopeptide (Lys-Gly) (interchain with G-Cter in SUMO1); alternate). Lys34 is covalently cross-linked (Glycyl lysine isopeptide (Lys-Gly) (interchain with G-Cter in SUMO2); alternate). A Phosphoserine modification is found at Ser36. Thr39 bears the Phosphothreonine mark. In terms of domain architecture, KH 1 spans 42 to 104 (MVELRILLQS…ETIGEILKKI (63 aa)). Glycyl lysine isopeptide (Lys-Gly) (interchain with G-Cter in SUMO2) cross-links involve residues Lys52 and Lys60. Tandem repeats lie at residues 54–76 (AGAVIGKGGKNIKALRTDYNASV) and 59–62 (GKGG). The interval 54–421 (AGAVIGKGGK…QIRHESGASI (368 aa)) is 2 X 22 AA approximate repeats. The segment at 59–407 (GKGGKNIKAL…LAGSIIGKGG (349 aa)) is 5 X 4 AA repeats of G-X-G-G. Ser75 and Ser116 each carry phosphoserine. Positions 144-209 (DCELRLLIHQ…DRVVECIKII (66 aa)) constitute a KH 2 domain. Lys163 is covalently cross-linked (Glycyl lysine isopeptide (Lys-Gly) (interchain with G-Cter in SUMO1); alternate). A Glycyl lysine isopeptide (Lys-Gly) (interchain with G-Cter in SUMO2); alternate cross-link involves residue Lys163. An N6-acetyllysine modification is found at Lys198. A phosphoserine mark is found at Ser214 and Ser216. Lys219 is covalently cross-linked (Glycyl lysine isopeptide (Lys-Gly) (interchain with G-Cter in SUMO2); alternate). Position 219 is an N6-succinyllysine; alternate (Lys219). An RNA-binding RGG-box region spans residues 236 to 273 (YGGFTMMFDDRRGRPVGFPMRGRGGFDRMPPGRGGRPM). A run of 3 repeats spans residues 245 to 250 (DRRGRP), 257 to 260 (GRGG), and 267 to 270 (GRGG). The interval 245–329 (DRRGRPVGFP…LMAYDRRGRP (85 aa)) is 2 X 6 AA approximate repeats. The tract at residues 250–329 (PVGFPMRGRG…LMAYDRRGRP (80 aa)) is disordered. Low complexity predominate over residues 252–266 (GFPMRGRGGFDRMPP). Residues 276–285 (SRRDYDDMSP) are compositionally biased toward basic and acidic residues. A Phosphoserine modification is found at Ser284. The stretch at 295-298 (GRGG) is one 3-4 repeat. Arg316 carries the post-translational modification Omega-N-methylarginine. The stretch at 324-329 (DRRGRP) is one 2-2 repeat. The residue at position 377 (Arg377) is an Omega-N-methylarginine. The residue at position 379 (Ser379) is a Phosphoserine. Tyr380 bears the Phosphotyrosine mark. The KH 3 domain maps to 387-451 (IITTQVTIPK…DQIQNAQYLL (65 aa)). Tandem repeats lie at residues 399-421 (AGSIIGKGGQRIKQIRHESGASI) and 404-407 (GKGG). The residue at position 405 (Lys405) is an N6-acetyllysine; alternate. Lys405 is covalently cross-linked (Glycyl lysine isopeptide (Lys-Gly) (interchain with G-Cter in SUMO2); alternate). Ser420 carries the post-translational modification Phosphoserine. Residue Lys422 forms a Glycyl lysine isopeptide (Lys-Gly) (interchain with G-Cter in SUMO1); alternate linkage. A Glycyl lysine isopeptide (Lys-Gly) (interchain with G-Cter in SUMO2); alternate cross-link involves residue Lys422. Lys422 participates in a covalent cross-link: Glycyl lysine isopeptide (Lys-Gly) (interchain with G-Cter in SUMO); alternate.

Identified in the spliceosome C complex. Interacts with ANKRD28, RBM42 and ZIK1. Interacts with DDX1. Interacts with MDM2; this interaction leads to ubiquitination and proteasomal degradation. Interacts with p53/TP53. Interacts with BRDT. Interacts with IVNS1ABP. Interacts with PPIA/CYPA. Part of a transcription inhibitory ribonucleoprotein complex composed at least of the circular RNA circZNF827, ZNF827 and HNRNPL. Post-translationally, sumoylated by CBX4. Sumoylation is increased upon DNA damage, such as that produced by doxorubicin, etoposide, UV light and camptothecin, due to enhanced CBX4 phosphorylation by HIPK2 under these conditions. In terms of processing, ubiquitinated by MDM2. Doxorubicin treatment does not affect monoubiquitination, but slightly decreases HNRNPK poly-ubiquitination. O-glycosylated (O-GlcNAcylated), in a cell cycle-dependent manner.

It is found in the cytoplasm. The protein resides in the nucleus. The protein localises to the nucleoplasm. It localises to the cell projection. Its subcellular location is the podosome. Functionally, one of the major pre-mRNA-binding proteins. Binds tenaciously to poly(C) sequences. Likely to play a role in the nuclear metabolism of hnRNAs, particularly for pre-mRNAs that contain cytidine-rich sequences. Can also bind poly(C) single-stranded DNA. Plays an important role in p53/TP53 response to DNA damage, acting at the level of both transcription activation and repression. When sumoylated, acts as a transcriptional coactivator of p53/TP53, playing a role in p21/CDKN1A and 14-3-3 sigma/SFN induction. As far as transcription repression is concerned, acts by interacting with long intergenic RNA p21 (lincRNA-p21), a non-coding RNA induced by p53/TP53. This interaction is necessary for the induction of apoptosis, but not cell cycle arrest. As part of a ribonucleoprotein complex composed at least of ZNF827, HNRNPL and the circular RNA circZNF827 that nucleates the complex on chromatin, may negatively regulate the transcription of genes involved in neuronal differentiation. This Macaca fascicularis (Crab-eating macaque) protein is Heterogeneous nuclear ribonucleoprotein K (HNRNPK).